Consider the following 192-residue polypeptide: Imidazoleglycerol-phosphate dehydratase (192 aa).

Belongs to the imidazoleglycerol-phosphate dehydratase family.

It is found in the cytoplasm. The enzyme catalyses D-erythro-1-(imidazol-4-yl)glycerol 3-phosphate = 3-(imidazol-4-yl)-2-oxopropyl phosphate + H2O. The protein operates within amino-acid biosynthesis; L-histidine biosynthesis; L-histidine from 5-phospho-alpha-D-ribose 1-diphosphate: step 6/9. In Hydrogenobaculum sp. (strain Y04AAS1), this protein is Imidazoleglycerol-phosphate dehydratase.